A 306-amino-acid chain; its full sequence is MLQTHIPVMLSEVLKVLDPKGGEFYLDCTFGAGGYSKAILESCDCYVVALDRDPNVIKKAEEIKQNYVERFDFIATNFADSFAKLKEKQFDGIVLDLGVSSMQLDVADRGFSFLHDGPLDMRMSGQGFSAEEFVNTLEEKEIADIIYKYGNESFSRRIAKSIVEYRKTARIDSTGKLAEIVRSSIGFRKGKIDPATKTFQAIRIYINDELGELERFLMNVKNILKKDGRLVVVSFHSLEDMIIKNFFKENSEKPVARSKYAKDDIIIDPNKWLRIITNKALAPSDKEIRLNIRARSAKLRTAKKIL.

S-adenosyl-L-methionine is bound by residues 33–35, D51, F82, D96, and Q103; that span reads GGY.

The protein belongs to the methyltransferase superfamily. RsmH family.

The protein localises to the cytoplasm. It carries out the reaction cytidine(1402) in 16S rRNA + S-adenosyl-L-methionine = N(4)-methylcytidine(1402) in 16S rRNA + S-adenosyl-L-homocysteine + H(+). Specifically methylates the N4 position of cytidine in position 1402 (C1402) of 16S rRNA. The protein is Ribosomal RNA small subunit methyltransferase H of Rickettsia akari (strain Hartford).